The following is a 436-amino-acid chain: Serine--tRNA ligase (436 aa).

Residues 43–55 (TKSEQLKQKRNEV) are compositionally biased toward basic and acidic residues. The interval 43–68 (TKSEQLKQKRNEVSDQIAQAKRNKED) is disordered. An L-serine-binding site is contributed by 237-239 (TAE). 268 to 270 (RSE) provides a ligand contact to ATP. Glu-291 contacts L-serine. Position 355 to 358 (355 to 358 (EISS)) interacts with ATP. Ser-390 is an L-serine binding site.

Belongs to the class-II aminoacyl-tRNA synthetase family. Type-1 seryl-tRNA synthetase subfamily. As to quaternary structure, homodimer. The tRNA molecule binds across the dimer.

It is found in the cytoplasm. It carries out the reaction tRNA(Ser) + L-serine + ATP = L-seryl-tRNA(Ser) + AMP + diphosphate + H(+). It catalyses the reaction tRNA(Sec) + L-serine + ATP = L-seryl-tRNA(Sec) + AMP + diphosphate + H(+). It functions in the pathway aminoacyl-tRNA biosynthesis; selenocysteinyl-tRNA(Sec) biosynthesis; L-seryl-tRNA(Sec) from L-serine and tRNA(Sec): step 1/1. Functionally, catalyzes the attachment of serine to tRNA(Ser). Is also able to aminoacylate tRNA(Sec) with serine, to form the misacylated tRNA L-seryl-tRNA(Sec), which will be further converted into selenocysteinyl-tRNA(Sec). This is Serine--tRNA ligase from Lactobacillus johnsonii (strain CNCM I-12250 / La1 / NCC 533).